The sequence spans 142 residues: Large ribosomal subunit protein bL17 (142 aa).

The protein belongs to the bacterial ribosomal protein bL17 family. In terms of assembly, part of the 50S ribosomal subunit. Contacts protein L32.

The sequence is that of Large ribosomal subunit protein bL17 from Chlamydia abortus (strain DSM 27085 / S26/3) (Chlamydophila abortus).